A 495-amino-acid polypeptide reads, in one-letter code: Glycerol kinase (495 aa).

T11 lines the ADP pocket. ATP contacts are provided by T11, T12, and S13. A sn-glycerol 3-phosphate-binding site is contributed by T11. R15 is a binding site for ADP. Sn-glycerol 3-phosphate is bound by residues R81, E82, Y133, and D242. 5 residues coordinate glycerol: R81, E82, Y133, D242, and Q243. Residues T264 and G307 each coordinate ADP. T264, G307, Q311, and G408 together coordinate ATP. G408 and N412 together coordinate ADP.

The protein belongs to the FGGY kinase family.

The enzyme catalyses glycerol + ATP = sn-glycerol 3-phosphate + ADP + H(+). Its pathway is polyol metabolism; glycerol degradation via glycerol kinase pathway; sn-glycerol 3-phosphate from glycerol: step 1/1. Its activity is regulated as follows. Inhibited by fructose 1,6-bisphosphate (FBP). Its function is as follows. Key enzyme in the regulation of glycerol uptake and metabolism. Catalyzes the phosphorylation of glycerol to yield sn-glycerol 3-phosphate. The protein is Glycerol kinase of Alkalilimnicola ehrlichii (strain ATCC BAA-1101 / DSM 17681 / MLHE-1).